The primary structure comprises 464 residues: Dolichyl-diphosphooligosaccharide--protein glycosyltransferase subunit 1B (464 aa).

The signal sequence occupies residues 1–24 (MAARIGIFSVFVAVLLSISAFSSA). The Lumenal segment spans residues 25-436 (QDLQIVNAER…TFKPIYMLAE (412 aa)). 2 N-linked (GlcNAc...) asparagine glycosylation sites follow: Asn106 and Asn298. A Glycyl lysine isopeptide (Lys-Gly) (interchain with G-Cter in ubiquitin) cross-link involves residue Lys310. N-linked (GlcNAc...) asparagine glycosylation occurs at Asn352. A helical transmembrane segment spans residues 437–457 (PFMLVSAFFLVFVASLAYVHI). The Cytoplasmic portion of the chain corresponds to 458-464 (DLNIVRK).

This sequence belongs to the OST1 family. Component of the oligosaccharyltransferase (OST) complex.

Its subcellular location is the endoplasmic reticulum membrane. It functions in the pathway protein modification; protein glycosylation. Its function is as follows. Subunit of the oligosaccharyl transferase (OST) complex that catalyzes the initial transfer of a defined glycan (Glc(3)Man(9)GlcNAc(2) in eukaryotes) from the lipid carrier dolichol-pyrophosphate to an asparagine residue within an Asn-X-Ser/Thr consensus motif in nascent polypeptide chains, the first step in protein N-glycosylation. N-glycosylation occurs cotranslationally and the complex associates with the Sec61 complex at the channel-forming translocon complex that mediates protein translocation across the endoplasmic reticulum (ER). All subunits are required for a maximal enzyme activity. This chain is Dolichyl-diphosphooligosaccharide--protein glycosyltransferase subunit 1B (OST1B), found in Arabidopsis thaliana (Mouse-ear cress).